The chain runs to 1239 residues: Protein strawberry notch homolog 1 (1239 aa).

The disordered stretch occupies residues 684–837 (AQSNNNSPRD…SANSNTNSSF (154 aa)). A compositionally biased stretch (basic and acidic residues) spans 694–713 (SPCKENKIKKRKGEEVSREA). The segment covering 728–744 (DESESESDASDNEESDN) has biased composition (acidic residues). Residues 778 to 790 (KEHKKVKEKKKKK) show a composition bias toward basic residues. Positions 814–837 (FTSTVGTTTSSTNASANSNTNSSF) are enriched in low complexity. Residues 838–866 (VTSQDAVERAQQMKKELLDKLEKLAEDLP) adopt a coiled-coil conformation.

It belongs to the SBNO family.

Its subcellular location is the nucleus. In terms of biological role, plays a crucial role in the regulation of neural stem cells (NSCs) proliferation. Enhances the phosphorylation of GSK3B through the PI3K-Akt signaling pathway, thereby upregulating the Wnt/beta-catenin signaling pathway and promoting the proliferation of NSCs. This is Protein strawberry notch homolog 1 (SBNO1) from Gallus gallus (Chicken).